The following is a 466-amino-acid chain: Argininosuccinate lyase (466 aa).

S27, N114, and T159 together coordinate 2-(N(omega)-L-arginino)succinate. H160 serves as the catalytic Proton acceptor. S281 serves as the catalytic Proton donor. 2-(N(omega)-L-arginino)succinate-binding residues include N289, Y321, Q326, and K329.

The protein belongs to the lyase 1 family. Argininosuccinate lyase subfamily. Homotetramer. In terms of tissue distribution, eye lens.

The catalysed reaction is 2-(N(omega)-L-arginino)succinate = fumarate + L-arginine. It participates in amino-acid biosynthesis; L-arginine biosynthesis; L-arginine from L-ornithine and carbamoyl phosphate: step 3/3. Its function is as follows. Delta crystallin, the principal crystallin in embryonic lens, is found only in birds and reptiles. This protein also functions as an enzymatically active argininosuccinate lyase. The chain is Argininosuccinate lyase (ASL) from Anser anser anser (Western greylag goose).